We begin with the raw amino-acid sequence, 222 residues long: (4-{4-[2-(gamma-L-glutamylamino)ethyl]phenoxymethyl}furan-2-yl)methanamine synthase (222 aa).

Belongs to the MfnF family.

It catalyses the reaction gamma-L-glutamyltyramine + [5-(aminomethyl)furan-3-yl]methyl diphosphate = (4-{4-[2-(gamma-L-glutamylamino)ethyl]phenoxymethyl}furan-2-yl)methanamine + diphosphate. It functions in the pathway cofactor biosynthesis; methanofuran biosynthesis. Catalyzes the condensation between 5-(aminomethyl)-3-furanmethanol diphosphate (F1-PP) and gamma-glutamyltyramine to produce APMF-Glu. The sequence is that of (4-{4-[2-(gamma-L-glutamylamino)ethyl]phenoxymethyl}furan-2-yl)methanamine synthase from Methanococcus vannielii.